The sequence spans 538 residues: Dolichol kinase (538 aa).

The Lumenal portion of the chain corresponds to 1-18 (MTRECAPPTPGSGAPLSG). The helical transmembrane segment at 19–39 (SVLAEAAVVFVVVLSIHAAVW) threads the bilayer. Over 40-74 (DRYSWCAVALAVQAFYVQYKWDRLLQQGSAVFQFR) the chain is Cytoplasmic. Residues 75-95 (MSANSGLLPASVVMPLLGLVM) form a helical membrane-spanning segment. The Lumenal portion of the chain corresponds to 96–111 (KERCQAAGNPYFERFG). Residues 112-132 (IVVAATGMAVALFSSVLALGI) traverse the membrane as a helical segment. At 133–134 (TR) the chain is on the cytoplasmic side. The helical transmembrane segment at 135-155 (PVPTNTCVISGLAGGVIIYIM) threads the bilayer. Over 156–163 (KHSLSVGE) the chain is Lumenal. The chain crosses the membrane as a helical span at residues 164 to 184 (VIEVLEALLIFVYLNMILLYL). Topologically, residues 185-188 (LPRC) are cytoplasmic. A helical transmembrane segment spans residues 189 to 209 (FTPGEALLVLGGISFMLNQLI). The Lumenal segment spans residues 210 to 224 (KRSLTVVESQGDPLD). A helical membrane pass occupies residues 225-245 (FFLLVVVVGMVLMGIFFSTLF). Over 246 to 254 (VFMDSGTWA) the chain is Cytoplasmic. The chain crosses the membrane as a helical span at residues 255-275 (SSIFFHLMTCVLGLGVVLPWL). The Lumenal portion of the chain corresponds to 276-297 (HRLIRRNPLLWLFQFLFQTETR). A helical membrane pass occupies residues 298–318 (VYLLAYWCLLATVACLVVLYQ). At 319 to 337 (NAKRSSSESKKHQAPTITR) the chain is on the cytoplasmic side. A helical membrane pass occupies residues 338 to 354 (KYFHFIVVATYIPGIIL). At 355–359 (DRPLL) the chain is on the lumenal side. Residues 360–380 (YVAATVCLAVFIFLEYVRYFR) form a helical membrane-spanning segment. The Cytoplasmic segment spans residues 381 to 401 (IKPLGHTLRSLLSLFLDERDS). The chain crosses the membrane as a helical span at residues 402–422 (GPLILTHIYLLLGMSLPIWLV). Residues 423 to 436 (PRPCTQKGSLGGAR) lie on the Lumenal side of the membrane. Residues 437-457 (ALVPYAGVLAVGVGDTVASIF) traverse the membrane as a helical segment. Residues 458 to 472 (GSTMGEIRWPGTKKT) lie on the Cytoplasmic side of the membrane. The interval 459-474 (STMGEIRWPGTKKTFE) is CTP-binding. Residues 473–493 (FEGTMTSIFAQIISVALILIF) form a helical membrane-spanning segment. At 494–495 (DS) the chain is on the lumenal side. A helical transmembrane segment spans residues 496-516 (GVDLNYSYAWILGSISTVSLL). The Cytoplasmic portion of the chain corresponds to 517 to 538 (EAYTTQIDNLLLPLYLLILLMA).

It belongs to the polyprenol kinase family.

The protein resides in the endoplasmic reticulum membrane. It carries out the reaction a di-trans,poly-cis-dolichol + CTP = a di-trans,poly-cis-dolichyl phosphate + CDP + H(+). It participates in protein modification; protein glycosylation. Its function is as follows. Catalyzes CTP-mediated phosphorylation of dolichol, the terminal step in de novo dolichyl monophosphate (Dol-P) biosynthesis. Dol-P is a lipid carrier essential for the synthesis of N-linked and O-linked oligosaccharides and for GPI anchors. This Bos taurus (Bovine) protein is Dolichol kinase (DOLK).